The primary structure comprises 129 residues: NADPH-dependent 7-cyano-7-deazaguanine reductase (129 aa).

C42 functions as the Thioimide intermediate in the catalytic mechanism. D49 serves as the catalytic Proton donor. Substrate is bound by residues 64–66 (VEL) and 83–84 (HE).

This sequence belongs to the GTP cyclohydrolase I family. QueF type 1 subfamily.

The protein localises to the cytoplasm. It carries out the reaction 7-aminomethyl-7-carbaguanine + 2 NADP(+) = 7-cyano-7-deazaguanine + 2 NADPH + 3 H(+). Its pathway is tRNA modification; tRNA-queuosine biosynthesis. Functionally, catalyzes the NADPH-dependent reduction of 7-cyano-7-deazaguanine (preQ0) to 7-aminomethyl-7-deazaguanine (preQ1). The chain is NADPH-dependent 7-cyano-7-deazaguanine reductase from Synechococcus sp. (strain CC9605).